A 125-amino-acid chain; its full sequence is Fluoride-specific ion channel FluC (125 aa).

4 helical membrane-spanning segments follow: residues 5-25 (ILAICMGASVGALARWGLALW), 37-57 (LAANLVGGYLVGVAIASFHLL), 71-91 (GFLGGLTTFSSFSAEVVTMLL), and 97-117 (VALLTAAAHLGGSLFLTWLGI). Na(+) contacts are provided by Gly74 and Thr77.

This sequence belongs to the fluoride channel Fluc/FEX (TC 1.A.43) family.

It is found in the cell inner membrane. The enzyme catalyses fluoride(in) = fluoride(out). Na(+) is not transported, but it plays an essential structural role and its presence is essential for fluoride channel function. In terms of biological role, fluoride-specific ion channel. Important for reducing fluoride concentration in the cell, thus reducing its toxicity. The sequence is that of Fluoride-specific ion channel FluC from Variovorax paradoxus (strain S110).